The sequence spans 549 residues: Cytoplasmic trehalase (549 aa).

Substrate-binding positions include R168, 175 to 176 (WD), N212, 221 to 223 (RSQ), 292 to 294 (RDE), and G324. Residues D326 and E509 each act as proton donor/acceptor in the active site. A substrate-binding site is contributed by E525.

This sequence belongs to the glycosyl hydrolase 37 family. In terms of assembly, monomer.

It localises to the cytoplasm. The enzyme catalyses alpha,alpha-trehalose + H2O = alpha-D-glucose + beta-D-glucose. The protein operates within glycan degradation; trehalose degradation; D-glucose from alpha,alpha-trehalose: step 1/1. Hydrolyzes trehalose to glucose. Could be involved, in cells returning to low osmolarity conditions, in the utilization of the accumulated cytoplasmic trehalose, which was synthesized in response to high osmolarity. The sequence is that of Cytoplasmic trehalase from Escherichia fergusonii (strain ATCC 35469 / DSM 13698 / CCUG 18766 / IAM 14443 / JCM 21226 / LMG 7866 / NBRC 102419 / NCTC 12128 / CDC 0568-73).